A 696-amino-acid polypeptide reads, in one-letter code: uncharacterized protein (696 aa).

10 helical membrane passes run 38 to 58, 107 to 127, 215 to 235, 245 to 265, 292 to 312, 329 to 349, 380 to 400, 402 to 422, 433 to 453, and 457 to 477; these read IISIISGIFIGLTAALLNALA, LIYVSVSVGFAFIATTLGYVV, AMASGIAASFNAPVGGVIFAL, SLFTGSIWYEFLCSASSVVAL, TLPFIFISILCGCLGSVLIYL, VFFVIFLSLITSLTAYAILGE, FWVTAIVLFTSALLGLLLTSA, FGAAIPTGIIVPSLAIGACIG, FPSLAGTSIYGVIGSIAFLSS, and LVVALVVILFELTGALNIALP. CBS domains follow at residues 527 to 587 and 617 to 674; these read RSPE…PMSS and IHPT…THTG.

Belongs to the chloride channel (TC 2.A.49) family.

The protein resides in the membrane. Voltage-gated chloride channel. This is an uncharacterized protein from Schizosaccharomyces pombe (strain 972 / ATCC 24843) (Fission yeast).